A 543-amino-acid polypeptide reads, in one-letter code: Malate synthase (543 aa).

Arg-162 serves as the catalytic Proton acceptor. Asp-449 (proton donor) is an active-site residue.

The protein belongs to the malate synthase family.

The enzyme catalyses glyoxylate + acetyl-CoA + H2O = (S)-malate + CoA + H(+). It functions in the pathway carbohydrate metabolism; glyoxylate cycle; (S)-malate from isocitrate: step 2/2. This chain is Malate synthase (masA), found in Dictyostelium discoideum (Social amoeba).